A 152-amino-acid chain; its full sequence is Deoxyuridine 5'-triphosphate nucleotidohydrolase (152 aa).

Residues 71-73 (RSG), Asn-84, 88-90 (LID), and Met-98 contribute to the substrate site.

It belongs to the dUTPase family. It depends on Mg(2+) as a cofactor.

It carries out the reaction dUTP + H2O = dUMP + diphosphate + H(+). The protein operates within pyrimidine metabolism; dUMP biosynthesis; dUMP from dCTP (dUTP route): step 2/2. Functionally, this enzyme is involved in nucleotide metabolism: it produces dUMP, the immediate precursor of thymidine nucleotides and it decreases the intracellular concentration of dUTP so that uracil cannot be incorporated into DNA. This Shewanella sp. (strain MR-7) protein is Deoxyuridine 5'-triphosphate nucleotidohydrolase.